Consider the following 127-residue polypeptide: Small ribosomal subunit protein uS11 (127 aa).

This sequence belongs to the universal ribosomal protein uS11 family. In terms of assembly, part of the 30S ribosomal subunit. Interacts with proteins S7 and S18. Binds to IF-3.

Located on the platform of the 30S subunit, it bridges several disparate RNA helices of the 16S rRNA. Forms part of the Shine-Dalgarno cleft in the 70S ribosome. This Rickettsia africae (strain ESF-5) protein is Small ribosomal subunit protein uS11.